Consider the following 615-residue polypeptide: ATP-dependent RNA helicase DBP9 (615 aa).

The interval 1–37 (MSASTKRKRDQAEESVPAENPASTDVEKAIKPAQKQE) is disordered. Basic and acidic residues predominate over residues 25–37 (DVEKAIKPAQKQE). The Q motif motif lies at 40 to 68 (TSFVDLGLDPRLLQAIAQQKFAKPTLVQR). The Helicase ATP-binding domain maps to 71–248 (IPLALNGQDV…GIFRRDPTLL (178 aa)). 84–91 (ADCGSGKT) lines the ATP pocket. Positions 196–199 (DEAD) match the DEAD box motif. Residues 259 to 491 (GITQFVAKCG…PYNFNMKQVD (233 aa)) form the Helicase C-terminal domain. The segment covering 351 to 363 (GDDEEPAETAEAQ) has biased composition (acidic residues). 2 disordered regions span residues 351 to 396 (GDDE…DKEY) and 583 to 615 (KDKK…RKTK). Positions 583–594 (KDKKGKGKKGRG) are enriched in basic residues.

It belongs to the DEAD box helicase family. DDX56/DBP9 subfamily.

The protein localises to the nucleus. It localises to the nucleolus. It catalyses the reaction ATP + H2O = ADP + phosphate + H(+). Its function is as follows. ATP-binding RNA helicase involved in the biogenesis of 60S ribosomal subunits and is required for the normal formation of 25S and 5.8S rRNAs. This chain is ATP-dependent RNA helicase DBP9 (DBP9), found in Gibberella zeae (strain ATCC MYA-4620 / CBS 123657 / FGSC 9075 / NRRL 31084 / PH-1) (Wheat head blight fungus).